The following is a 97-amino-acid chain: U-reduvitoxin-Pr10a (97 aa).

An N-terminal signal peptide occupies residues 1-18 (MKTALFLVFALAFIAVEG). 2 consecutive Pacifastin domains span residues 22–59 (KACSKPGQTVLAPDGCNHCRCSKNGIIMGCTKKMCPPR) and 62–97 (KQSCKPGATFKHKDGCNTCKCSDDGKSARCTARLCW). Intrachain disulfides connect Cys-24–Cys-42, Cys-37–Cys-56, and Cys-40–Cys-51. Residues 57–59 (PPR) form a pro-Pro-Arg motif necessary for proteolytic processing region. Cystine bridges form between Cys-65–Cys-82, Cys-77–Cys-96, and Cys-80–Cys-91.

Belongs to the protease inhibitor I19 family. In terms of tissue distribution, expressed by the venom gland.

The protein localises to the secreted. Functionally, inhibits trypsin activity and prophenoloxidase (PPO) activation, an enzyme essential for both clotting and insect innate immune responses. It does not inhibit activity of chymotrypsin and protease K, and has no effect on phenoloxidase (PO) activity. The protein is U-reduvitoxin-Pr10a of Platymeris rhadamanthus (Red spot assassin bug).